The sequence spans 469 residues: UDP-N-acetylmuramoylalanine--D-glutamate ligase (469 aa).

Residue 123–129 (GTNGKST) participates in ATP binding.

The protein belongs to the MurCDEF family.

Its subcellular location is the cytoplasm. The enzyme catalyses UDP-N-acetyl-alpha-D-muramoyl-L-alanine + D-glutamate + ATP = UDP-N-acetyl-alpha-D-muramoyl-L-alanyl-D-glutamate + ADP + phosphate + H(+). It participates in cell wall biogenesis; peptidoglycan biosynthesis. Cell wall formation. Catalyzes the addition of glutamate to the nucleotide precursor UDP-N-acetylmuramoyl-L-alanine (UMA). This Phenylobacterium zucineum (strain HLK1) protein is UDP-N-acetylmuramoylalanine--D-glutamate ligase.